Here is a 77-residue protein sequence, read N- to C-terminus: MSEVISIRVRRGLKKELEELGINYAEAVRKFLEELVARERRRRALERARALREELRKKGAFPPSAELIREDRDEASR.

A coiled-coil region spans residues Arg10–Ala60.

As to quaternary structure, forms a complex with putative toxin VapC3, possibly VapB(2)-VapC(2).

Antitoxin component of a type II toxin-antitoxin (TA) system. The chain is Putative antitoxin VapB3 (vAPb3) from Pyrobaculum aerophilum (strain ATCC 51768 / DSM 7523 / JCM 9630 / CIP 104966 / NBRC 100827 / IM2).